The chain runs to 245 residues: tRNA (guanine-N(1)-)-methyltransferase (245 aa).

S-adenosyl-L-methionine-binding positions include G111 and 131–136 (MGDYVL).

It belongs to the RNA methyltransferase TrmD family. In terms of assembly, homodimer.

Its subcellular location is the cytoplasm. It carries out the reaction guanosine(37) in tRNA + S-adenosyl-L-methionine = N(1)-methylguanosine(37) in tRNA + S-adenosyl-L-homocysteine + H(+). Its function is as follows. Specifically methylates guanosine-37 in various tRNAs. This chain is tRNA (guanine-N(1)-)-methyltransferase, found in Staphylococcus aureus (strain USA300).